Consider the following 480-residue polypeptide: tRNA (uracil-5-)-methyltransferase homolog B (480 aa).

The S-adenosyl-L-methionine site is built by glutamine 299, glutamate 349, and asparagine 399. The active-site Nucleophile is the cysteine 427. Glutamate 473 serves as the catalytic Proton acceptor.

Belongs to the class I-like SAM-binding methyltransferase superfamily. RNA M5U methyltransferase family.

It localises to the mitochondrion. The enzyme catalyses uridine(54) in tRNA + S-adenosyl-L-methionine = 5-methyluridine(54) in tRNA + S-adenosyl-L-homocysteine + H(+). It catalyses the reaction a uridine in 12S rRNA + S-adenosyl-L-methionine = a 5-methyluridine in 12S rRNA + S-adenosyl-L-homocysteine + H(+). Mitochondrial S-adenosyl-L-methionine-dependent methyltransferase that catalyzes the formation of 5-methyl-uridine in tRNAs and 12S rRNA. Catalyzes the methylation of uridine at position 54 (m5U54) in all tRNAs. Specifically methylates the uridine in position 429 of 12S rRNA (m5U429). Does not affect RNA stability or mitochondrial translation. In Danio rerio (Zebrafish), this protein is tRNA (uracil-5-)-methyltransferase homolog B (trmt2b).